A 372-amino-acid polypeptide reads, in one-letter code: Peptide chain release factor 2 (372 aa).

Glutamine 253 carries the post-translational modification N5-methylglutamine.

Belongs to the prokaryotic/mitochondrial release factor family. In terms of processing, methylated by PrmC. Methylation increases the termination efficiency of RF2.

Its subcellular location is the cytoplasm. Functionally, peptide chain release factor 2 directs the termination of translation in response to the peptide chain termination codons UGA and UAA. The chain is Peptide chain release factor 2 from Mycolicibacterium gilvum (strain PYR-GCK) (Mycobacterium gilvum (strain PYR-GCK)).